A 423-amino-acid chain; its full sequence is Adenylosuccinate synthetase (423 aa).

GTP-binding positions include 12-18 (GDEGKGK) and 40-42 (GHT). Aspartate 13 acts as the Proton acceptor in catalysis. Positions 13 and 40 each coordinate Mg(2+). IMP is bound by residues 13 to 16 (DEGK), 38 to 41 (NAGH), threonine 128, arginine 142, glutamine 223, threonine 238, and arginine 302. The active-site Proton donor is histidine 41. Position 298–304 (298–304 (TTTGRPR)) interacts with substrate. GTP contacts are provided by residues arginine 304, 330 to 332 (RLD), and 412 to 414 (CIG).

The protein belongs to the adenylosuccinate synthetase family. Homodimer. Requires Mg(2+) as cofactor.

It localises to the cytoplasm. The catalysed reaction is IMP + L-aspartate + GTP = N(6)-(1,2-dicarboxyethyl)-AMP + GDP + phosphate + 2 H(+). It functions in the pathway purine metabolism; AMP biosynthesis via de novo pathway; AMP from IMP: step 1/2. Its function is as follows. Plays an important role in the de novo pathway of purine nucleotide biosynthesis. Catalyzes the first committed step in the biosynthesis of AMP from IMP. This chain is Adenylosuccinate synthetase, found in Dehalococcoides mccartyi (strain ATCC BAA-2100 / JCM 16839 / KCTC 5957 / BAV1).